The sequence spans 241 residues: Carboxy-S-adenosyl-L-methionine synthase (241 aa).

Residues Y38, 63 to 65 (GCS), 88 to 89 (DN), 116 to 117 (DI), N131, and R198 each bind S-adenosyl-L-methionine.

It belongs to the class I-like SAM-binding methyltransferase superfamily. Cx-SAM synthase family. Homodimer.

The enzyme catalyses prephenate + S-adenosyl-L-methionine = carboxy-S-adenosyl-L-methionine + 3-phenylpyruvate + H2O. In terms of biological role, catalyzes the conversion of S-adenosyl-L-methionine (SAM) to carboxy-S-adenosyl-L-methionine (Cx-SAM). This Haemophilus influenzae (strain PittGG) protein is Carboxy-S-adenosyl-L-methionine synthase.